A 543-amino-acid chain; its full sequence is Phosphatidylinositol/phosphatidylcholine transfer protein SFH12 (543 aa).

One can recognise a CRAL-TRIO domain in the interval 120 to 294 (EIDEVLKYYP…FLGGSCTCAD (175 aa)). The tract at residues 316 to 356 (HNGDHKCSKGSQAENSGEKTIPEEDDSTTEPASEEEKASKE) is disordered. Residues 490 to 526 (DKEEMLNAAISRSNVLEQELAATKKALDDSLGRQEEL) adopt a coiled-coil conformation.

It belongs to the SFH family. In terms of tissue distribution, specifically expressed in flowers.

The protein localises to the golgi apparatus membrane. It is found in the cell membrane. Its function is as follows. Required for transport of secretory proteins from the Golgi complex. Catalyzes the transfer of phosphatidylinositol and phosphatidylcholine between membranes in vitro. The chain is Phosphatidylinositol/phosphatidylcholine transfer protein SFH12 (SFH12) from Arabidopsis thaliana (Mouse-ear cress).